The sequence spans 500 residues: NAD(P)H-quinone oxidoreductase chain 4, chloroplastic (500 aa).

Helical transmembrane passes span 4–24 (FPWLTILVVLPIFAGSLIFFL), 37–57 (ISICLLEFLLMTYAFCYHFQL), 87–107 (LGSILLTGFITTLATLAAWPI), 113–130 (LFYFLMLAMYSGQIGLFS), 134–154 (LLLFFIMWELELIPVYLLLSM), 167–187 (FILYTAGGSIFFLIGVLGMGL), 211–231 (ILLYFGFLIAYAVKLPIIPLH), 242–262 (HYSTCMLLAGILLKMGAYGLI), 272–292 (AHYLFSPWLVIIGAIQIIYAA), 313–333 (MGFIIIGIGSITNIGLNGAIL), 334–354 (QILSHGFIGATLFFLAGTASD), 386–406 (LALPGMSGFVAELVVFFGLIT), 417–437 (LITFVMAIGMILTPIYLLSML), and 462–482 (LFILICIFLPVIGIGIYPDFV).

It belongs to the complex I subunit 4 family.

It localises to the plastid. It is found in the chloroplast thylakoid membrane. It catalyses the reaction a plastoquinone + NADH + (n+1) H(+)(in) = a plastoquinol + NAD(+) + n H(+)(out). The enzyme catalyses a plastoquinone + NADPH + (n+1) H(+)(in) = a plastoquinol + NADP(+) + n H(+)(out). In Triticum aestivum (Wheat), this protein is NAD(P)H-quinone oxidoreductase chain 4, chloroplastic (ndhD).